Here is a 413-residue protein sequence, read N- to C-terminus: MFNFNASRWTRAQAMKVNKFDLTTSMPEIGTDFPIMRDDLWLWDTWPLRDINGNPVSFKGWNVIFSLVADRNIPWNDRHSHARIGYFYSKDGKSWVYGGHLLQESANTRTAEWSGGTIMAPGSRNQVETFFTSTLFDKNGVREAVAAVTKGRIYADSEGVWFKGFDQSTDLFQADGLFYQNYAENNLWNFRDPHVFINPEDGETYALFEANVATVRGEDDIGEDEIGPVPANTVVPKDANLCSASIGIARCLSPDRTEWELLPPLLTAFGVNDQMERPHVIFQNGLTYLFTISHDSTYADGLTGSDGLYGFVSENGIFGPYEPLNGSGLVLGGPASQPTEAYAHYIMNNGLVESFINEIIDPKSGKVIAGGSLAPTVRVELQGHETFATEVFDYGYIPASYAWPVWPFPDRRK.

The active-site Nucleophile is the Asp-44. Glu-276 functions as the Proton donor/acceptor in the catalytic mechanism.

Belongs to the glycosyl hydrolase 68 family.

Its subcellular location is the secreted. The catalysed reaction is Hydrolysis of terminal non-reducing beta-D-fructofuranoside residues in beta-D-fructofuranosides.. This Zymomonas mobilis subsp. mobilis (strain ATCC 10988 / DSM 424 / LMG 404 / NCIMB 8938 / NRRL B-806 / ZM1) protein is Extracellular sucrase (sacC).